Reading from the N-terminus, the 37-residue chain is Photosystem II reaction center protein T (37 aa).

The chain crosses the membrane as a helical span at residues 3 to 23 (ALVYTFLLVGTLGIIFFAIFF).

This sequence belongs to the PsbT family. PSII is composed of 1 copy each of membrane proteins PsbA, PsbB, PsbC, PsbD, PsbE, PsbF, PsbH, PsbI, PsbJ, PsbK, PsbL, PsbM, PsbT, PsbY, PsbZ, Psb30/Ycf12, at least 3 peripheral proteins of the oxygen-evolving complex and a large number of cofactors. It forms dimeric complexes.

The protein resides in the plastid. The protein localises to the chloroplast thylakoid membrane. In terms of biological role, found at the monomer-monomer interface of the photosystem II (PS II) dimer, plays a role in assembly and dimerization of PSII. PSII is a light-driven water plastoquinone oxidoreductase, using light energy to abstract electrons from H(2)O, generating a proton gradient subsequently used for ATP formation. This chain is Photosystem II reaction center protein T, found in Spirogyra maxima (Green alga).